Reading from the N-terminus, the 179-residue chain is Replication restart protein DnaT (179 aa).

Polar residues predominate over residues 151–168 (SRSSNGGMPQRDINSVSE). The disordered stretch occupies residues 151-179 (SRSSNGGMPQRDINSVSEPDNHIPPGFRG).

It belongs to the DnaT family. Homooligomerizes. Interacts with PriB. Component of the replication restart primosome. Primosome assembly occurs via a 'hand-off' mechanism. PriA binds to replication forks, subsequently PriB then DnaT bind; DnaT then displaces ssDNA to generate the helicase loading substrate.

In terms of biological role, involved in the restart of stalled replication forks, which reloads the replicative helicase on sites other than the origin of replication. Can function in multiple replication restart pathways. Displaces ssDNA from a PriB-ssDNA complex. Probably forms a spiral filament on ssDNA. The chain is Replication restart protein DnaT from Salmonella schwarzengrund (strain CVM19633).